The sequence spans 571 residues: DNA primase (571 aa).

Residues 20 to 44 (CPFHKEKTPSFQVDTEKGYYHCFGC) form a CHC2-type zinc finger. In terms of domain architecture, Toprim spans 229–309 (AELVVVEGYM…KFRVRATSVP (81 aa)). Residues glutamate 235, aspartate 280, and aspartate 282 each coordinate Mg(2+).

This sequence belongs to the DnaG primase family. Monomer. Interacts with DnaB. It depends on Zn(2+) as a cofactor. Requires Mg(2+) as cofactor.

It carries out the reaction ssDNA + n NTP = ssDNA/pppN(pN)n-1 hybrid + (n-1) diphosphate.. In terms of biological role, RNA polymerase that catalyzes the synthesis of short RNA molecules used as primers for DNA polymerase during DNA replication. The sequence is that of DNA primase from Deinococcus radiodurans (strain ATCC 13939 / DSM 20539 / JCM 16871 / CCUG 27074 / LMG 4051 / NBRC 15346 / NCIMB 9279 / VKM B-1422 / R1).